Here is a 745-residue protein sequence, read N- to C-terminus: Arf-GAP with coiled-coil, ANK repeat and PH domain-containing protein 1 (745 aa).

The region spanning 1–226 is the BAR domain; the sequence is MTVKLDFEEC…RKELGGQLHQ (226 aa). Residues 1–382 are required for formation of endosomal tubules when overexpressed with PIP5K1C; that stretch reads MTVKLDFEEC…RGLGQGSGHL (382 aa). In terms of domain architecture, PH spans 265–360; it reads GLVMEGHLFK…WVSAVQSSIA (96 aa). One can recognise an Arf-GAP domain in the interval 405 to 527; sequence GHVAAQVQSV…KFLTKLPEIR (123 aa). Residues 405–745 form a required for interaction with GULP1 region; it reads GHVAAQVQSV…SRRSHDLHTL (341 aa). The segment at 420-443 adopts a C4-type zinc-finger fold; that stretch reads CCDCREPAPEWASINLGVTLCIQC. A 3'-nitrotyrosine modification is found at Tyr-485. Residues 525–567 are prevents interaction with ITGB1 when S-554 is not phosphorylated; the sequence is EIRGRRGGRGPPRGHPPVPPKPGLIRPKPGSFRSKPEPPSEDL. The interval 525–569 is disordered; sequence EIRGRRGGRGPPRGHPPVPPKPGLIRPKPGSFRSKPEPPSEDLQS. The span at 537-546 shows a compositional bias: pro residues; sequence RGHPPVPPKP. Phosphoserine; by PKB is present on Ser-555. ANK repeat units follow at residues 607-640, 644-673, and 677-707; these read ENATPLIQATAAVRVLNSLLACEFLLQNGANVNQ, QGRGPLHHATILGHTGLACLFLKRGADLGV, and EGRDPLTIAVETANADIVTLLRLAKMREADA.

In terms of assembly, banana-shaped homodimer laterally assembling into tetramers, the tetramers further pack helically onto the membrane. Interacts with GTP-bound ARF6. Interacts with third cytoplasmic loop of SLC2A4/GLUT4. Interacts with CLTC. Interacts with GULP1. Forms a complex with GDP-bound ARF6 and GULP1. Interacts with ITGB1; required for ITGB1 recycling. Post-translationally, phosphorylation at Ser-555 by PKB is required for interaction with ITGB1, export of ITGB1 from recycling endosomes to the cell surface and ITGB1-dependent cell migration.

It localises to the recycling endosome membrane. GAP activity stimulated by phosphatidylinositol 4,5-bisphosphate (PIP2) and phosphatidic acid. In terms of biological role, GTPase-activating protein (GAP) for ADP ribosylation factor 6 (ARF6) required for clathrin-dependent export of proteins from recycling endosomes to trans-Golgi network and cell surface. Required for regulated export of ITGB1 from recycling endosomes to the cell surface and ITGB1-dependent cell migration. In Bos taurus (Bovine), this protein is Arf-GAP with coiled-coil, ANK repeat and PH domain-containing protein 1 (ACAP1).